We begin with the raw amino-acid sequence, 338 residues long: Anthocyanidin reductase ((2S)-flavan-3-ol-forming) (338 aa).

Residues 18 to 21 (TGFV), lysine 48, 87 to 90 (VATP), and tyrosine 168 contribute to the NADP(+) site.

Belongs to the NAD(P)-dependent epimerase/dehydratase family. Dihydroflavonol-4-reductase subfamily. In terms of tissue distribution, expressed in leaves and grape berries.

It carries out the reaction a (2S,3R)-flavan-3-ol + 2 NADP(+) = an anthocyanidin with a 3-hydroxy group + 2 NADPH + 2 H(+). The enzyme catalyses a (2S,3S)-flavan-3-ol + 2 NADP(+) = an anthocyanidin with a 3-hydroxy group + 2 NADPH + 2 H(+). Its pathway is secondary metabolite biosynthesis; flavonoid biosynthesis. Produces the terminal flavan-3-ol monomers required for the formation of proanthocyanidins or condensed tannins in leaves and flowers, as well as in the skin and seeds of developing berries. Behaves as a reductase and as a C-3 epimerase. Catalyzes the double reduction of anthocyanidins, producing a mixture of (2S,3S)- and (2S,3R)-flavan-3-ols. The enzyme catalyzes sequential hydride transfers to C-2 and C-4, respectively and epimerization at C-3 is achieved by tautomerization that occurs between the two hydride transfers. Converts cyanidin, pelargonidin and delphinidin into catechin and epicatechin, afzelechin and epiafzelechin, and gallocatechin and epigallocatechin respectively. In Vitis vinifera (Grape), this protein is Anthocyanidin reductase ((2S)-flavan-3-ol-forming).